Here is a 444-residue protein sequence, read N- to C-terminus: tRNA (guanine-N(7)-)-methyltransferase non-catalytic subunit TRM82 (444 aa).

WD repeat units lie at residues M1 to D47, F48 to P99, P100 to C147, F148 to L192, G193 to L237, F238 to D279, and F308 to P354. The interval R55–P92 is disordered. Residues N71–K85 are compositionally biased toward basic and acidic residues. Residue S93 is modified to Phosphoserine.

The protein belongs to the WD repeat TRM82 family. As to quaternary structure, forms a heterodimer with the catalytic subunit TRM8.

It localises to the nucleus. Its pathway is tRNA modification; N(7)-methylguanine-tRNA biosynthesis. In terms of biological role, required for the formation of N(7)-methylguanine at position 46 (m7G46) in tRNA, a modification required to maintain stability of tRNAs; its absence resulting in tRNA decay. In the complex, it is required to stabilize and induce conformational changes of the catalytic subunit. The chain is tRNA (guanine-N(7)-)-methyltransferase non-catalytic subunit TRM82 from Saccharomyces cerevisiae (strain ATCC 204508 / S288c) (Baker's yeast).